A 1036-amino-acid polypeptide reads, in one-letter code: UDP-N-acetylglucosamine--peptide N-acetylglucosaminyltransferase 110 kDa subunit (1036 aa).

Alanine 2 is subject to N-acetylalanine. Serine 3 and serine 4 each carry phosphoserine; by GSK3-beta; alternate. Residues serine 3 and serine 4 are each glycosylated (O-linked (GlcNAc) serine; alternate). TPR repeat units lie at residues 11-44 (STGL…EPDN), 79-112 (AEAY…KPDF), 113-146 (IDGY…NPDL), 147-180 (YCVR…QPNF), 181-214 (AVAW…DPNF), 215-248 (LDAY…SPNH), 249-282 (AVVH…QPHF), 283-316 (PDAY…CPTH), 317-350 (ADSL…FPEF), 351-384 (AAAH…SPTF), 385-418 (ADAY…NPAF), and 419-452 (ADAH…KPDF). Residue serine 389 is glycosylated (O-linked (GlcNAc) serine; by autocatalysis). Position 444 is a phosphothreonine (threonine 444). The TPR 13; truncated repeat unit spans residues 453–463 (PDAYCNLAHCL). Positions 454–456 (DAY) match the DFP motif motif. Positions 478–493 (KLVSIVAEQLEKNRLP) match the Nuclear localization signal motif. Histidine 498 serves as the catalytic Proton acceptor. UDP is bound by residues glutamine 839, lysine 842, 896–898 (APK), 901–904 (HVRR), 920–922 (HTT), and aspartate 925. Phosphotyrosine is present on tyrosine 979. Residues 981–1000 (KKIRGKVWKQRISSPLFNTK) are required for phosphatidylinositol 3,4,5-triphosphate binding.

The protein belongs to the glycosyltransferase 41 family. O-GlcNAc transferase subfamily. Monomer; may exist in different oligomerization states in cells. Homotrimer, oligomerizes via TPR repeats 6 and 7. Trimerization is not necessary for activity in vitro, however it increases affinity for UDP-GlcNAc. A heterotrimer consisting of two 110 kDa subunits and one highly related 78 kDa subunit is isolated from liver. Component of a THAP1/THAP3-HCFC1-OGT complex. Component of the NSL complex at least composed of MOF/KAT8, KANSL1, KANSL2, KANSL3, MCRS1, PHF20, OGT1/OGT, WDR5 and HCFC1. Found in a complex with KIF5B, RHOT1, RHOT2 and TRAK1. Found in a complex composed of at least SINHCAF, SIN3A, HDAC1, SAP30, RBBP4, OGT and TET1. Component of a complex composed of KMT2E/MLL5, OGT and USP7; the complex stabilizes KMT2E/MLL5, preventing KMT2E/MLL5 ubiquitination and proteasomal-mediated degradation. Interacts (via TPRs 1-6) with SIN3A; the interaction mediates transcriptional repression in parallel with histone deacetylase. Interacts (via TPR 5-6) with TET1, TET2 and TET3. Interacts (via TPR repeats 6 and 7) with ATXN10. Interacts with NSD2. Interacts with PROSER1; this interaction mediates TET2 O-GlcNAcylation and stability by promoting the interaction between OGT and TET2. In terms of processing, several different immunologically-related forms of this protein are found in different tissues (with apparent molecular weights of 110, 80 and 78 kDa); they are probably the result of alternative splicing and/or proteolysis. O-glycosylated; contains O-GlcNAc. Both p110 and p78 forms are O-glycosylated. Post-translationally, ubiquitinated by the SCF(FBXO31) complex, leading to its proteasomal degradation. In terms of processing, phosphorylation on Ser-3 or Ser-4 by GSK3-beta positively regulates its activity. Phosphorylation at Thr-444 by AMPK promotes nuclear localization. Glycosylated via autocatalysis; O-GlcNAcylation at Ser-389 promotes nuclear localization. As to expression, expressed in brain, heart, liver, thymus, muscle, lung, spleen, uterus and ovary; in the kidney only an immunologically-related 78 kDa band is present, which is also present in liver and muscle. In the pancreas, expressed in both exocrine acinar cells and in endocrine cells of the islets of Langerhans.

Its subcellular location is the cytoplasm. It is found in the nucleus. The protein resides in the cell membrane. It localises to the mitochondrion membrane. The protein localises to the cell projection. The enzyme catalyses L-seryl-[protein] + UDP-N-acetyl-alpha-D-glucosamine = 3-O-(N-acetyl-beta-D-glucosaminyl)-L-seryl-[protein] + UDP + H(+). It catalyses the reaction L-threonyl-[protein] + UDP-N-acetyl-alpha-D-glucosamine = 3-O-(N-acetyl-beta-D-glucosaminyl)-L-threonyl-[protein] + UDP + H(+). Its pathway is protein modification; protein glycosylation. Inhibited by UDP, UTP and UDP-GlcNAc; 50 mM NaCl or KCl inhibit activity about 70%. Functionally, catalyzes the transfer of a single N-acetylglucosamine from UDP-GlcNAc to a serine or threonine residue in cytoplasmic and nuclear proteins resulting in their modification with a beta-linked N-acetylglucosamine (O-GlcNAc). Glycosylates a large and diverse number of proteins including histone H2B, AKT1, AMPK, ATG4B, CAPRIN1, EZH2, FNIP1, GSDMD, KRT7, LMNA, LMNB1, LMNB2, RPTOR, HOXA1, PFKL, KMT2E/MLL5, MAPT/TAU, TET2, RBL2, RET, NOD2 and HCFC1. Can regulate their cellular processes via cross-talk between glycosylation and phosphorylation or by affecting proteolytic processing. Involved in insulin resistance in muscle and adipocyte cells via glycosylating insulin signaling components and inhibiting the 'Thr-308' phosphorylation of AKT1, enhancing IRS1 phosphorylation and attenuating insulin signaling. Involved in glycolysis regulation by mediating glycosylation of 6-phosphofructokinase PFKL, inhibiting its activity. Plays a key role in chromatin structure by mediating O-GlcNAcylation of 'Ser-112' of histone H2B: recruited to CpG-rich transcription start sites of active genes via its interaction with TET proteins (TET1, TET2 or TET3). As part of the NSL complex indirectly involved in acetylation of nucleosomal histone H4 on several lysine residues. O-GlcNAcylation of 'Ser-75' of EZH2 increases its stability, and facilitating the formation of H3K27me3 by the PRC2/EED-EZH2 complex. Stabilizes KMT2E/MLL5 by mediating its glycosylation, thereby preventing KMT2E/MLL5 ubiquitination. Regulates circadian oscillation of the clock genes and glucose homeostasis in the liver. Stabilizes clock proteins BMAL1 and CLOCK through O-glycosylation, which prevents their ubiquitination and subsequent degradation. Promotes the CLOCK-BMAL1-mediated transcription of genes in the negative loop of the circadian clock such as PER1/2 and CRY1/2. O-glycosylates HCFC1 and regulates its proteolytic processing and transcriptional activity. Component of a THAP1/THAP3-HCFC1-OGT complex that is required for the regulation of the transcriptional activity of RRM1. Regulates mitochondrial motility in neurons by mediating glycosylation of TRAK1. Promotes autophagy by mediating O-glycosylation of ATG4B. Acts as a regulator of mTORC1 signaling by mediating O-glycosylation of RPTOR and FNIP1: O-GlcNAcylation of RPTOR in response to glucose sufficiency promotes activation of the mTORC1 complex. The sequence is that of UDP-N-acetylglucosamine--peptide N-acetylglucosaminyltransferase 110 kDa subunit (Ogt) from Rattus norvegicus (Rat).